The following is a 116-amino-acid chain: UPF0102 protein LA_2381 (116 aa).

The protein belongs to the UPF0102 family.

The protein is UPF0102 protein LA_2381 of Leptospira interrogans serogroup Icterohaemorrhagiae serovar Lai (strain 56601).